The chain runs to 289 residues: Metal-staphylopine import system permease protein CntC (289 aa).

5 consecutive transmembrane segments (helical) span residues 13–33 (AVIALGIIVLYVFLGLAAPLV), 77–97 (LLYVFVALFVSVLIGSILGFL), 115–135 (VMLAFPSYVVTLALIALFGMG), 194–214 (IAIISSSSMCSMILQISGFSF), and 249–269 (IAIVIIVMAFNFLSDALQIAI). The ABC transmembrane type-1 domain occupies 73 to 262 (IRPSLLYVFV…IIVMAFNFLS (190 aa)).

Belongs to the binding-protein-dependent transport system permease family. As to quaternary structure, the complex is composed of two ATP-binding proteins (CntD and CntF), two transmembrane proteins (CntB and CntC) and a solute-binding protein (CntA).

The protein localises to the cell membrane. Functionally, part of the ABC transporter complex CntABCDF (Opp1) involved in the uptake of metal in complex with the metallophore staphylopine (StP). May be involved in the import of a large array of divalent metals ions such as nickel, cobalt, zinc, copper and iron. Probably responsible for the translocation of the substrate across the membrane. This Staphylococcus aureus (strain Mu50 / ATCC 700699) protein is Metal-staphylopine import system permease protein CntC.